The primary structure comprises 210 residues: Ribosomal RNA large subunit methyltransferase E (210 aa).

S-adenosyl-L-methionine contacts are provided by G60, W62, D85, D101, and D126. K166 serves as the catalytic Proton acceptor.

This sequence belongs to the class I-like SAM-binding methyltransferase superfamily. RNA methyltransferase RlmE family.

The protein resides in the cytoplasm. It carries out the reaction uridine(2552) in 23S rRNA + S-adenosyl-L-methionine = 2'-O-methyluridine(2552) in 23S rRNA + S-adenosyl-L-homocysteine + H(+). Its function is as follows. Specifically methylates the uridine in position 2552 of 23S rRNA at the 2'-O position of the ribose in the fully assembled 50S ribosomal subunit. This is Ribosomal RNA large subunit methyltransferase E from Bordetella pertussis (strain Tohama I / ATCC BAA-589 / NCTC 13251).